A 314-amino-acid chain; its full sequence is Putative glycosyltransferase ORF31 (314 aa).

The protein belongs to the glycosyltransferase group 1 family.

This Haloarcula hispanica (His1V) protein is Putative glycosyltransferase ORF31.